The sequence spans 482 residues: 2-succinylbenzoate--CoA ligase (482 aa).

This sequence belongs to the ATP-dependent AMP-binding enzyme family. MenE subfamily.

The catalysed reaction is 2-succinylbenzoate + ATP + CoA = 2-succinylbenzoyl-CoA + AMP + diphosphate. It functions in the pathway quinol/quinone metabolism; 1,4-dihydroxy-2-naphthoate biosynthesis; 1,4-dihydroxy-2-naphthoate from chorismate: step 5/7. Its pathway is quinol/quinone metabolism; menaquinone biosynthesis. Functionally, converts 2-succinylbenzoate (OSB) to 2-succinylbenzoyl-CoA (OSB-CoA). This Bacillus cereus (strain ZK / E33L) protein is 2-succinylbenzoate--CoA ligase.